We begin with the raw amino-acid sequence, 30 residues long: Pyrrole-2-carboxylate oxygenase (30 aa).

As to quaternary structure, homotrimer. FAD serves as cofactor.

The enzyme catalyses pyrrole-2-carboxylate + NADH + O2 + H(+) = 5-hydroxypyrrole-2-carboxylate + NAD(+) + H2O. Its function is as follows. Monooxygenase that initiates the degradation of pyrrole-2-carboxylate, which allows Arthrobacter sp. strain Py1 to grow on pyrrole-2-carboxylate as sole carbon, nitrogen, and energy source. To a lesser extent, can also use pyrrole, pyrrole-2-aldehyde, and indole-2-carboxylate as substrate. In Arthrobacter sp. (strain Py1), this protein is Pyrrole-2-carboxylate oxygenase.